Consider the following 279-residue polypeptide: Movement protein (279 aa).

The disordered stretch occupies residues 246–279 (SESEELNVESPPAAIGSSSASRSEAFRPQVVNGL). Positions 254 to 268 (ESPPAAIGSSSASRS) are enriched in low complexity.

The protein belongs to the cucumovirus movement protein family.

The protein localises to the host cell junction. The protein resides in the host plasmodesma. Functionally, transports viral genome to neighboring plant cells directly through plasmosdesmata, without any budding. The movement protein allows efficient cell to cell propagation, by bypassing the host cell wall barrier. Acts by forming a tubular structure at the host plasmodesmata, enlarging it enough to allow free passage of virion capsids. This is Movement protein from Cucumis sativus (Cucumber).